The chain runs to 322 residues: Malate dehydrogenase (322 aa).

NAD(+) contacts are provided by residues 10-15 and Asp-34; that span reads GSGMIG. Substrate is bound by residues Arg-83 and Arg-89. NAD(+)-binding positions include Asn-96 and 119–121; that span reads ITN. Substrate contacts are provided by Asn-121 and Arg-152. The Proton acceptor role is filled by His-176.

The protein belongs to the LDH/MDH superfamily. MDH type 3 family.

It carries out the reaction (S)-malate + NAD(+) = oxaloacetate + NADH + H(+). Catalyzes the reversible oxidation of malate to oxaloacetate. This chain is Malate dehydrogenase, found in Mesorhizobium japonicum (strain LMG 29417 / CECT 9101 / MAFF 303099) (Mesorhizobium loti (strain MAFF 303099)).